A 227-amino-acid polypeptide reads, in one-letter code: Ion-translocating oxidoreductase complex subunit E (227 aa).

The next 5 membrane-spanning stretches (helical) occupy residues 34–56 (AINAIGLGMTTTLVLTITNTIIS), 68–88 (IPIYMMIISSVVTSIEMLLHA), 91–111 (FNLYQSLGIFIPLIVTNCIIV), 127–147 (FFDGIFIGLGSMFAMFAVGSI), and 181–201 (TIILAVFPPGGFLILGFLIAI).

It belongs to the NqrDE/RnfAE family. In terms of assembly, the complex is composed of six subunits: RnfA, RnfB, RnfC, RnfD, RnfE and RnfG.

It localises to the cell inner membrane. Functionally, part of a membrane-bound complex that couples electron transfer with translocation of ions across the membrane. The sequence is that of Ion-translocating oxidoreductase complex subunit E from Buchnera aphidicola subsp. Acyrthosiphon pisum (strain 5A).